Reading from the N-terminus, the 1059-residue chain is Pleckstrin homology domain-containing family M member 1 (1059 aa).

Residues 40 to 182 enclose the RUN domain; sequence TSEDGDANTM…LSFELSYKSA (143 aa). Residue serine 218 is modified to Phosphoserine. 3 disordered regions span residues 218–244, 272–334, and 354–411; these read SLDS…RRDR, LQEN…TPMF, and SEEP…DQGS. 2 stretches are compositionally biased toward polar residues: residues 313–334 and 392–401; these read SKAQ…TPMF and GSTSDQQPSS. A phosphoserine mark is found at serine 430, serine 433, and serine 488. In terms of domain architecture, PH 1 spans 536–627; that stretch reads GLMKLGTVAR…WLDRVREALQ (92 aa). The LIR motif lies at 634-640; that stretch reads EEEWVNI. The segment at 657–1059 is interaction with RAB7A; the sequence is LPPYSALLPE…RKYQEQNTVS (403 aa). A PH 2 domain is found at 686 to 780; sequence DAIKESLLYL…WRDLVRKVLA (95 aa). Residues 989–1043 form a Phorbol-ester/DAG-type zinc finger; that stretch reads QHVYHCDLCTQRGFICQICHHQDIIFPFEFDTTVRCAECRTVFHQSCQAVVRKGC.

In terms of assembly, interacts (via N- and C-terminus) with RAB7A (GTP-bound form). Simultaneously interacts with RAB7A and ARL8B; bringing about clustering and fusion of late endosomes and lysosomes. Interacts (via RUN domain) with ARL8B (GTP-bound form); the interaction is required for PLEKHM1 localization to lysosomes and for ARL8B function in delivery and degradation of endocytic and autophagic cargo in lysosomes. PLEKHM1 and PLEKHM2 compete for interaction with ARL8B. Interacts with ARL8A; the interaction is weaker than with ARL8B. Interacts with VPS41, VPS11, VPS18, VPS33A and VPS39; indicative for an association with the HOPS complex; the interactions with, at least, VPS41, VPS11, VPS18 and VPS33A require ARL8B. Interacts with GABARAP, GABARAPL, GABARAPL2, MAP1LC3A, MAP1LC3B and MAP1LC3C. Interacts with PAFAH1B. Interacts (via N- and C-terminus) with NDEL1. Interacts (via C-terminus) with MAP3K7. Interacts (via N- and C-terminus) with FAM98A. Interacts (via C-terminus) with DEF8; this interaction is weak but increased in a RAB7A-dependent manner. May interact with sialyl-lex-positive protein. In terms of tissue distribution, expressed in testis, skeletal muscle, lung, liver, spleen, brain, heart, kidney and bone. Weakly expressed in monocytes (at protein level).

It localises to the autolysosome membrane. The protein resides in the endosome membrane. It is found in the late endosome membrane. The protein localises to the lysosome membrane. Its function is as follows. Acts as a multivalent adapter protein that regulates Rab7-dependent and HOPS complex-dependent fusion events in the endolysosomal system and couples autophagic and the endocytic trafficking pathways. Acts as a dual effector of RAB7A and ARL8B that simultaneously binds these GTPases, bringing about clustering and fusion of late endosomes and lysosomes. Required for late stages of endolysosomal maturation, facilitating both endocytosis-mediated degradation of growth factor receptors and autophagosome clearance. Interaction with Arl8b is a crucial factor in the terminal maturation of autophagosomes and to mediate autophagosome-lysosome fusion. Positively regulates lysosome peripheral distribution and ruffled border formation in osteoclasts. May be involved in negative regulation of endocytic transport from early endosome to late endosome/lysosome implicating its association with Rab7. May have a role in sialyl-lex-mediated transduction of apoptotic signals. Involved in bone resorption. The polypeptide is Pleckstrin homology domain-containing family M member 1 (Rattus norvegicus (Rat)).